A 190-amino-acid chain; its full sequence is Elongation factor P (190 aa).

The protein belongs to the elongation factor P family.

It is found in the cytoplasm. Its pathway is protein biosynthesis; polypeptide chain elongation. Involved in peptide bond synthesis. Stimulates efficient translation and peptide-bond synthesis on native or reconstituted 70S ribosomes in vitro. Probably functions indirectly by altering the affinity of the ribosome for aminoacyl-tRNA, thus increasing their reactivity as acceptors for peptidyl transferase. This is Elongation factor P from Amoebophilus asiaticus (strain 5a2).